A 172-amino-acid polypeptide reads, in one-letter code: Nicotinamide-nucleotide adenylyltransferase (172 aa).

Belongs to the archaeal NMN adenylyltransferase family.

It localises to the cytoplasm. The enzyme catalyses beta-nicotinamide D-ribonucleotide + ATP + H(+) = diphosphate + NAD(+). It participates in cofactor biosynthesis; NAD(+) biosynthesis; NAD(+) from nicotinamide D-ribonucleotide: step 1/1. The polypeptide is Nicotinamide-nucleotide adenylyltransferase (Saccharolobus solfataricus (strain ATCC 35092 / DSM 1617 / JCM 11322 / P2) (Sulfolobus solfataricus)).